Here is a 598-residue protein sequence, read N- to C-terminus: Beta-myrcene/(E)-beta-ocimene synthase 2, chloroplastic (598 aa).

A chloroplast-targeting transit peptide spans 1–30; that stretch reads MATLCIGSAPIYQNACIHNFRLQRPRRFIS. Arginine 307, aspartate 344, aspartate 348, arginine 486, and asparagine 489 together coordinate (2E)-geranyl diphosphate. Mg(2+)-binding residues include aspartate 344 and aspartate 348. A DDXXD motif motif is present at residues 344 to 348; that stretch reads DDIYD. Residues asparagine 489, threonine 493, and glutamate 497 each contribute to the Mg(2+) site.

Belongs to the terpene synthase family. Tpsb subfamily. It depends on Mg(2+) as a cofactor. Mn(2+) is required as a cofactor. In terms of tissue distribution, expressed exclusively in mature flowers, but not in inmmature buds.

It localises to the plastid. It is found in the chloroplast. It catalyses the reaction (2E)-geranyl diphosphate = beta-myrcene + diphosphate. It functions in the pathway secondary metabolite biosynthesis; terpenoid biosynthesis. Functionally, involved in monoterpene (C10) biosynthesis. The major products are alpha- and beta-pinene, sabinene, beta-myrcene, (E)-beta-ocimene and limonene. The sequence is that of Beta-myrcene/(E)-beta-ocimene synthase 2, chloroplastic (TPS24) from Arabidopsis thaliana (Mouse-ear cress).